An 847-amino-acid polypeptide reads, in one-letter code: Vacuolar membrane protease (847 aa).

Residues 1–17 (MQFGKSLLKHVYTRTFK) are Cytoplasmic-facing. The chain crosses the membrane as a helical span at residues 18–38 (SSLTCSIFAFTLLMIFFVLDW). The Vacuolar segment spans residues 39–348 (KRMNVYPRLD…GSYWQINLNL (310 aa)). Zn(2+) is bound by residues H146 and D158. The active-site Proton acceptor is E190. E191 is a binding site for Zn(2+). Residue N208 is glycosylated (N-linked (GlcNAc...) asparagine). Residue E216 coordinates Zn(2+). Residue N274 is glycosylated (N-linked (GlcNAc...) asparagine). H291 contacts Zn(2+). The helical transmembrane segment at 349-369 (HLFLNVVFLIACPAILFMCLF) threads the bilayer. Over 370–381 (RFPSLYAQLKKP) the chain is Cytoplasmic. Residues 382–402 (CYLICFTLSSLFVLIFDYVVV) form a helical membrane-spanning segment. At 403 to 415 (QSLTKLNPYVIHS) the chain is on the vacuolar side. A helical membrane pass occupies residues 416–436 (SPDAVLAFFFLTNLLGLVYSF). Residues 437 to 454 (RYVATHSRMSNEELSCIE) are Cytoplasmic-facing. The helical transmembrane segment at 455–475 (IVLIWYVSMFWYISLLIATLT) threads the bilayer. Over 476–482 (SIVRGLG) the chain is Vacuolar. A helical membrane pass occupies residues 483 to 503 (SLYFVNFGFFCSFFCCILTLI). Residues 504 to 560 (RVRYFVDRMVTINRPANPEQMPLVQSTSGNAYGTSRYPQHRLKAVVSKSASVKLNDN) are Cytoplasmic-facing. A helical transmembrane segment spans residues 561-581 (LWSVLFFSCLVPLPLFTCYNL). Over 582–605 (LSEVFIPAVHQSLIDGPYSNTCYK) the chain is Vacuolar. Residues 606-626 (FAVILVFMAIINSSPFVFRAL) form a helical membrane-spanning segment. The Cytoplasmic segment spans residues 627–630 (SKKS). The chain crosses the membrane as a helical span at residues 631 to 651 (SAILLMLWVSLLFNILRAEPF). The Vacuolar portion of the chain corresponds to 652–847 (NEKAPIKFRV…LLKMSKTHVM (196 aa)). Residues N726, N734, N800, and N834 are each glycosylated (N-linked (GlcNAc...) asparagine).

The protein belongs to the peptidase M28 family. Zn(2+) is required as a cofactor.

It localises to the vacuole membrane. In terms of biological role, may be involved in vacuolar sorting and osmoregulation. This Schizosaccharomyces japonicus (strain yFS275 / FY16936) (Fission yeast) protein is Vacuolar membrane protease.